We begin with the raw amino-acid sequence, 163 residues long: Globin CTT-V (163 aa).

Residues 1 to 16 (MKFFAVLTLCIIGAIA) form the signal peptide. Positions 18 to 163 (PLTSDEANLV…YTVAFEVIPA (146 aa)) constitute a Globin domain. H76 and H111 together coordinate heme b.

The protein belongs to the globin family.

The polypeptide is Globin CTT-V (CTT-V) (Chironomus thummi piger (Midge)).